We begin with the raw amino-acid sequence, 192 residues long: Imidazoleglycerol-phosphate dehydratase (192 aa).

This sequence belongs to the imidazoleglycerol-phosphate dehydratase family.

The protein resides in the cytoplasm. It catalyses the reaction D-erythro-1-(imidazol-4-yl)glycerol 3-phosphate = 3-(imidazol-4-yl)-2-oxopropyl phosphate + H2O. Its pathway is amino-acid biosynthesis; L-histidine biosynthesis; L-histidine from 5-phospho-alpha-D-ribose 1-diphosphate: step 6/9. The chain is Imidazoleglycerol-phosphate dehydratase from Staphylococcus epidermidis (strain ATCC 35984 / DSM 28319 / BCRC 17069 / CCUG 31568 / BM 3577 / RP62A).